A 132-amino-acid chain; its full sequence is NAD(P) transhydrogenase subunit alpha part 2 (132 aa).

The next 3 helical transmembrane spans lie at 43 to 63 (PLVF…YVVW), 72 to 92 (PLMS…MIAI), and 103 to 123 (LLGS…FIVT).

As to quaternary structure, complex of an alpha and a beta chain; in Rickettsia, the alpha chain seems to be made of two subunits.

The protein localises to the cell inner membrane. The catalysed reaction is NAD(+) + NADPH + H(+)(in) = NADH + NADP(+) + H(+)(out). In terms of biological role, the transhydrogenation between NADH and NADP is coupled to respiration and ATP hydrolysis and functions as a proton pump across the membrane. This Rickettsia prowazekii (strain Madrid E) protein is NAD(P) transhydrogenase subunit alpha part 2 (pntAB).